The sequence spans 380 residues: RNA binding protein fox-1 homolog 2 (380 aa).

Composition is skewed to polar residues over residues 1–20 and 36–56; these read MEKN…TPDT and NGLS…QSTE. The disordered stretch occupies residues 1 to 117; sequence MEKNKMVSQG…TPKRLHVSNI (117 aa). Over residues 72–102 the composition is skewed to low complexity; that stretch reads STPATSTANASSTTDGSQTEGQQSQTQNSEN. One can recognise an RRM domain in the interval 110–186; it reads KRLHVSNIPF…RKIEVNNATA (77 aa).

It is found in the nucleus. The protein resides in the cytoplasm. Functionally, RNA-binding protein that regulates alternative splicing events by binding to 5'-UGCAUGU-3' elements. Regulates alternative splicing of tissue-specific exons. The sequence is that of RNA binding protein fox-1 homolog 2 (rbfox2) from Xenopus tropicalis (Western clawed frog).